Consider the following 196-residue polypeptide: ATP-dependent Clp protease proteolytic subunit (196 aa).

Ser101 (nucleophile) is an active-site residue. Residue His126 is part of the active site.

This sequence belongs to the peptidase S14 family. As to quaternary structure, component of the chloroplastic Clp protease core complex.

It localises to the plastid. The protein resides in the chloroplast stroma. The catalysed reaction is Hydrolysis of proteins to small peptides in the presence of ATP and magnesium. alpha-casein is the usual test substrate. In the absence of ATP, only oligopeptides shorter than five residues are hydrolyzed (such as succinyl-Leu-Tyr-|-NHMec, and Leu-Tyr-Leu-|-Tyr-Trp, in which cleavage of the -Tyr-|-Leu- and -Tyr-|-Trp bonds also occurs).. Functionally, cleaves peptides in various proteins in a process that requires ATP hydrolysis. Has a chymotrypsin-like activity. Plays a major role in the degradation of misfolded proteins. The protein is ATP-dependent Clp protease proteolytic subunit of Barbarea verna (Land cress).